Here is a 650-residue protein sequence, read N- to C-terminus: Chaperone protein DnaK (650 aa).

Phosphothreonine; by autocatalysis is present on Thr200.

It belongs to the heat shock protein 70 family.

Functionally, acts as a chaperone. In Paraburkholderia phytofirmans (strain DSM 17436 / LMG 22146 / PsJN) (Burkholderia phytofirmans), this protein is Chaperone protein DnaK.